The following is a 514-amino-acid chain: ATP synthase subunit alpha (514 aa).

An ATP-binding site is contributed by Gly-170–Thr-177.

Belongs to the ATPase alpha/beta chains family. As to quaternary structure, F-type ATPases have 2 components, CF(1) - the catalytic core - and CF(0) - the membrane proton channel. CF(1) has five subunits: alpha(3), beta(3), gamma(1), delta(1), epsilon(1). CF(0) has three main subunits: a(1), b(2) and c(9-12). The alpha and beta chains form an alternating ring which encloses part of the gamma chain. CF(1) is attached to CF(0) by a central stalk formed by the gamma and epsilon chains, while a peripheral stalk is formed by the delta and b chains.

The protein localises to the cell inner membrane. The enzyme catalyses ATP + H2O + 4 H(+)(in) = ADP + phosphate + 5 H(+)(out). In terms of biological role, produces ATP from ADP in the presence of a proton gradient across the membrane. The alpha chain is a regulatory subunit. This is ATP synthase subunit alpha from Acidithiobacillus ferridurans.